The chain runs to 166 residues: uncharacterized protein (166 aa).

4 helical membrane-spanning segments follow: residues 7–27 (VLFKISFLLIILVSLILSLFY), 30–50 (FLFAFLLSFILFGITWAYCYI), 69–89 (IETLRFLFILMIISVFIKSLL), and 92–112 (NSFFPYISFLLSNLILGLVLF).

The protein to M.jannaschii MJ0795.1 and MJ0785.1.

It localises to the cell membrane. This is an uncharacterized protein from Methanocaldococcus jannaschii (strain ATCC 43067 / DSM 2661 / JAL-1 / JCM 10045 / NBRC 100440) (Methanococcus jannaschii).